The primary structure comprises 141 residues: Phosphoribosyl-AMP cyclohydrolase (141 aa).

Mg(2+) is bound at residue aspartate 88. Residue cysteine 89 coordinates Zn(2+). Residues aspartate 90 and aspartate 92 each coordinate Mg(2+). The Zn(2+) site is built by cysteine 109 and cysteine 116.

The protein belongs to the PRA-CH family. As to quaternary structure, homodimer. Mg(2+) serves as cofactor. Zn(2+) is required as a cofactor.

The protein localises to the cytoplasm. It catalyses the reaction 1-(5-phospho-beta-D-ribosyl)-5'-AMP + H2O = 1-(5-phospho-beta-D-ribosyl)-5-[(5-phospho-beta-D-ribosylamino)methylideneamino]imidazole-4-carboxamide. Its pathway is amino-acid biosynthesis; L-histidine biosynthesis; L-histidine from 5-phospho-alpha-D-ribose 1-diphosphate: step 3/9. Catalyzes the hydrolysis of the adenine ring of phosphoribosyl-AMP. The sequence is that of Phosphoribosyl-AMP cyclohydrolase from Paracidovorax citrulli (strain AAC00-1) (Acidovorax citrulli).